We begin with the raw amino-acid sequence, 196 residues long: ATP-dependent Clp protease proteolytic subunit (196 aa).

Ser-101 (nucleophile) is an active-site residue. Residue His-126 is part of the active site.

Belongs to the peptidase S14 family. Component of the chloroplastic Clp protease core complex.

The protein resides in the plastid. It localises to the chloroplast stroma. The enzyme catalyses Hydrolysis of proteins to small peptides in the presence of ATP and magnesium. alpha-casein is the usual test substrate. In the absence of ATP, only oligopeptides shorter than five residues are hydrolyzed (such as succinyl-Leu-Tyr-|-NHMec, and Leu-Tyr-Leu-|-Tyr-Trp, in which cleavage of the -Tyr-|-Leu- and -Tyr-|-Trp bonds also occurs).. Its function is as follows. Cleaves peptides in various proteins in a process that requires ATP hydrolysis. Has a chymotrypsin-like activity. Plays a major role in the degradation of misfolded proteins. The protein is ATP-dependent Clp protease proteolytic subunit of Barbarea verna (Land cress).